We begin with the raw amino-acid sequence, 658 residues long: Zinc finger protein 135 (658 aa).

The KRAB domain maps to valine 14–proline 85. The interval leucine 171 to arginine 196 is disordered. C2H2-type zinc fingers lie at residues tyrosine 214–histidine 236, tyrosine 242–histidine 264, tyrosine 270–histidine 292, tyrosine 298–histidine 320, tyrosine 326–histidine 348, tyrosine 354–histidine 376, tyrosine 382–histidine 404, tyrosine 410–histidine 432, tyrosine 438–histidine 460, tyrosine 466–histidine 488, tyrosine 494–histidine 516, tyrosine 522–histidine 544, tyrosine 550–histidine 572, tyrosine 578–histidine 600, tyrosine 606–histidine 628, and tyrosine 634–histidine 656.

The protein belongs to the krueppel C2H2-type zinc-finger protein family.

The protein localises to the nucleus. In terms of biological role, plays a role in the regulation of cell morphology and cytoskeletal organization. May be involved in transcriptional regulation. In Homo sapiens (Human), this protein is Zinc finger protein 135 (ZNF135).